A 644-amino-acid polypeptide reads, in one-letter code: MSEKKKFYITTPIYYPSAKLHIGNTYTTVASDALVRFKRLQGYDAFMLTGTDEHGQKIQRIAEDKGITPKAYVDEIVAGIKDLWKMMNISYDKFIRTTDEEHVKAVQKIVKKFYDNGDIYKSAYEGWYCTPCESFWTETQLVDGKCPDCGRPVEKTKEEAYFFKMSKYADRLIKYIEDHPDFIQPESRKNEMLNNFLKPGLQDLCISRSSFDWGIPITFDEKHVIYVWIDALSNYITALGYGSDNDELYNKFWPADLHLVGKDIIRFHTIYWPIMLMALDLPLPKQVFGHGWLLVDGGKMSKSKGNVVDPVVLINEFGTDPVRYYLLHEIPFGSDGLFNNEIFIKKINSDLANDLGNLVSRTAAMIEKYFDGSIQPPVDKEEIDNELIDMAISLPEKLDEDIKKLKIPEALDHIWDLIKRANKYIDETTPWVLAKDENKKARLGTVLYNLVESLRFVATTLTPFLPETGEKIKTQLNIELDTWESLSAFDGTRAGTKVSKGEVIFPRIDVDKKIEELNKLKEEQLKATRKMQPLKPEISIDDVDKLDLRVVKVLECEPVKKSKKLLKLKVELGGEERQVLSGISQFYKPEDLIGKKVVLVANLKPAKLMGQLSQGMILAVATDDDSKLYTLDIPEDIPTGSIVR.

A 'HIGH' region motif is present at residues tyrosine 14 to asparagine 24. The Zn(2+) site is built by cysteine 129, cysteine 132, cysteine 146, and cysteine 149. Residues lysine 299 to serine 303 carry the 'KMSKS' region motif. Lysine 302 serves as a coordination point for ATP. The region spanning aspartate 542 to arginine 644 is the tRNA-binding domain.

This sequence belongs to the class-I aminoacyl-tRNA synthetase family. MetG type 2A subfamily. In terms of assembly, homodimer. Zn(2+) is required as a cofactor.

The protein localises to the cytoplasm. It catalyses the reaction tRNA(Met) + L-methionine + ATP = L-methionyl-tRNA(Met) + AMP + diphosphate. In terms of biological role, is required not only for elongation of protein synthesis but also for the initiation of all mRNA translation through initiator tRNA(fMet) aminoacylation. The chain is Methionine--tRNA ligase (metG) from Clostridium acetobutylicum (strain ATCC 824 / DSM 792 / JCM 1419 / IAM 19013 / LMG 5710 / NBRC 13948 / NRRL B-527 / VKM B-1787 / 2291 / W).